The chain runs to 607 residues: Condensin-2 complex subunit H2 (607 aa).

Phosphothreonine is present on Thr-19. Phosphoserine occurs at positions 95, 231, 235, and 252. Disordered stretches follow at residues 211-312 (YPMS…WQSL) and 325-347 (KGKPYSVPPGVEEAPGQKRKRKG). Over residues 254–263 (GEEDAEDGAE) the composition is skewed to acidic residues. Position 494 is a phosphoserine (Ser-494).

This sequence belongs to the CND2 H2 (condensin-2 subunit 2) family. Component of the condensin-2 complex, which contains the SMC2 and SMC4 heterodimer, and three non SMC subunits, NCAPG2, NCAPH2 and NCAPD3 that probably regulate the complex.

The protein resides in the nucleus. Functionally, regulatory subunit of the condensin-2 complex, a complex that seems to provide chromosomes with an additional level of organization and rigidity and in establishing mitotic chromosome architecture. May promote the resolution of double-strand DNA catenanes (intertwines) between sister chromatids. Condensin-mediated compaction likely increases tension in catenated sister chromatids, providing directionality for type II topoisomerase-mediated strand exchanges toward chromatid decatenation. Required for decatenation of chromatin bridges at anaphase. Early in neurogenesis, may play an essential role to ensure accurate mitotic chromosome condensation in neuron stem cells, ultimately affecting neuron pool and cortex size. Seems to have lineage-specific role in T-cell development. The sequence is that of Condensin-2 complex subunit H2 from Mus musculus (Mouse).